Here is a 609-residue protein sequence, read N- to C-terminus: Ataxin-10 homolog (609 aa).

3 disordered regions span residues 265–293 (KSTTESTTESTTTESTDSTTDSTTTTTTG), 405–426 (KQQEGEEDPVNQILNDPFSKDS), and 461–490 (SDTNKSSSSSSSSSSSTTTDGETVTSKGFN). A compositionally biased stretch (low complexity) spans 266–292 (STTESTTESTTTESTDSTTDSTTTTTT). Low complexity predominate over residues 466–479 (SSSSSSSSSSSTTT). Polar residues predominate over residues 480-490 (DGETVTSKGFN).

Belongs to the ATXN10 family.

Its function is as follows. May play a role in the regulation of cytokinesis. The protein is Ataxin-10 homolog (atxn10) of Dictyostelium discoideum (Social amoeba).